A 261-amino-acid polypeptide reads, in one-letter code: MFEARLIQGSILKKVLEALKDLINEACWDISSGGVNLQSMDSSHVSLVQLTLRSEGFDTYRCDRNLAMGVNLTSMSKILKCAGNEDIITLRAEDNADTLALVFEAPNQEKVSDYEMKLMDLDVEQLGIPEQEYSCVVKMPSGEFARICRDLSHIGDAVVISCAKDGVKFSASGELGNGNIKLSQTSNVDKEEEAVSIEMNEPVQLTFALRYLNFFTKATPLSPTVTLSMSADVPLVVEYKIADMGHLKYYLAPKIEDEEGS.

An N6-acetyllysine mark is found at Lys14, Lys77, and Lys80. Residues Arg61 to Lys80 mediate DNA binding. Cys135 and Cys162 are disulfide-bonded. A Glycyl lysine isopeptide (Lys-Gly) (interchain with G-Cter in SUMO2); alternate cross-link involves residue Lys164. Lys164 is covalently cross-linked (Glycyl lysine isopeptide (Lys-Gly) (interchain with G-Cter in ubiquitin); alternate). Tyr211 is modified (phosphotyrosine; by EGFR). The residue at position 248 (Lys248) is an N6-acetyllysine. Lys254 is covalently cross-linked (Glycyl lysine isopeptide (Lys-Gly) (interchain with G-Cter in SUMO2)).

It belongs to the PCNA family. Homotrimer. Interacts with p300/EP300; the interaction occurs on chromatin in UV-irradiated damaged cells. Interacts with CREBBP (via transactivation domain and C-terminus); the interaction occurs on chromatin in UV-irradiated damaged cells. Directly interacts with POLD1, POLD3 and POLD4 subunits of the DNA polymerase delta complex, POLD3 being the major interacting partner; the interaction with POLD3 is inhibited by CDKN1A/p21(CIP1). Forms a complex with activator 1 heteropentamer in the presence of ATP. Interacts with EXO1, POLH, POLK, DNMT1, ERCC5, FEN1, CDC6 and POLDIP2. Interacts with POLB. Interacts with APEX2; this interaction is triggered by reactive oxygen species and increased by misincorporation of uracil in nuclear DNA. Forms a ternary complex with DNTTIP2 and core histone. Interacts with KCTD10. Interacts with PPP1R15A. Interacts with SMARCA5/SNF2H. Interacts with BAZ1B/WSTF; the interaction is direct and is required for BAZ1B/WSTF binding to replication foci during S phase. Interacts with HLTF and SHPRH. Interacts with NUDT15. Interaction is disrupted in response to UV irradiation and acetylation. Interacts with CDKN1A/p21(CIP1) and CDT1; interacts via their PIP-box which also recruits the DCX(DTL) complex. The interaction with CDKN1A inhibits POLD3 binding. Interacts with DDX11. Interacts with EGFR; positively regulates PCNA. Interacts with PARPBP. Interacts (when ubiquitinated) with SPRTN; leading to enhance RAD18-mediated PCNA ubiquitination. Interacts (when polyubiquitinated) with ZRANB3. Interacts with SMARCAD1. Interacts with CDKN1C. Interacts with PCLAF (via PIP-box). Interacts with RTEL1 (via PIP-box); the interaction is direct and essential for the suppression of telomere fragility. Interacts with FAM111A (via PIP-box); the interaction is direct and required for PCNA loading on chromatin binding. Interacts with LIG1. Interacts with SETMAR. Interacts with ANKRD17. Interacts with FBXO18/FBH1 (via PIP-box); the interaction recruits the DCX(DTL) complex and promotes ubiquitination and degradation of FBXO18/FBH1. Interacts with POLN. Interacts with SDE2 (via PIP-box); the interaction is direct and prevents ultraviolet light induced monoubiquitination. Component of the replisome complex composed of at least DONSON, MCM2, MCM7, PCNA and TICRR; interaction at least with PCNA occurs during DNA replication. Interacts with MAPK15; the interaction is chromatin binding dependent and prevents MDM2-mediated PCNA destruction by inhibiting the association of PCNA with MDM2. Interacts with PARP10 (via PIP-box). Interacts with DDI2. Interacts with HMCES (via PIP-box). Interacts with TRAIP (via PIP-box). Interacts with UHRF2. Interacts with ALKBH2; this interaction is enhanced during the S-phase of the cell cycle. Interacts with ATAD5; the interaction promotes USP1-mediated PCNA deubiquitination. Interacts (when phosphorylated) with GRB2. Interacts with ANG. Interacts with nuclear UNG; this interaction mediates UNG recruitment to S-phase replication foci. Interacts with ERCC6L2 (via an atypical PIP-box); this interaction facilitates cenrtomeric localization of ERCC6L2. Phosphorylated. Phosphorylation at Tyr-211 by EGFR stabilizes chromatin-associated PCNA. Post-translationally, acetylated by CREBBP and p300/EP300; preferentially acetylated by CREBBP on Lys-80, Lys-13 and Lys-14 and on Lys-77 by p300/EP300 upon loading on chromatin in response to UV irradiation. Lysine acetylation disrupts association with chromatin, hence promoting PCNA ubiquitination and proteasomal degradation in response to UV damage in a CREBBP- and EP300-dependent manner. Acetylation disrupts interaction with NUDT15 and promotes degradation. In terms of processing, ubiquitinated. Following DNA damage, can be either monoubiquitinated to stimulate direct bypass of DNA lesions by specialized DNA polymerases or polyubiquitinated to promote recombination-dependent DNA synthesis across DNA lesions by template switching mechanisms. Following induction of replication stress, monoubiquitinated by the UBE2B-RAD18 complex on Lys-164, leading to recruit translesion (TLS) polymerases, which are able to synthesize across DNA lesions in a potentially error-prone manner. An error-free pathway also exists and requires non-canonical polyubiquitination on Lys-164 through 'Lys-63' linkage of ubiquitin moieties by the E2 complex UBE2N-UBE2V2 and the E3 ligases, HLTF, RNF8 and SHPRH. This error-free pathway, also known as template switching, employs recombination mechanisms to synthesize across the lesion, using as a template the undamaged, newly synthesized strand of the sister chromatid. Monoubiquitination at Lys-164 also takes place in undamaged proliferating cells, and is mediated by the DCX(DTL) complex, leading to enhance PCNA-dependent translesion DNA synthesis. Sumoylated during S phase. Methylated on glutamate residues by ARMT1.

It is found in the nucleus. In terms of biological role, auxiliary protein of DNA polymerase delta and epsilon, is involved in the control of eukaryotic DNA replication by increasing the polymerase's processibility during elongation of the leading strand. Induces a robust stimulatory effect on the 3'-5' exonuclease and 3'-phosphodiesterase, but not apurinic-apyrimidinic (AP) endonuclease, APEX2 activities. Has to be loaded onto DNA in order to be able to stimulate APEX2. Plays a key role in DNA damage response (DDR) by being conveniently positioned at the replication fork to coordinate DNA replication with DNA repair and DNA damage tolerance pathways. Acts as a loading platform to recruit DDR proteins that allow completion of DNA replication after DNA damage and promote postreplication repair: Monoubiquitinated PCNA leads to recruitment of translesion (TLS) polymerases, while 'Lys-63'-linked polyubiquitination of PCNA is involved in error-free pathway and employs recombination mechanisms to synthesize across the lesion. This Rattus norvegicus (Rat) protein is Proliferating cell nuclear antigen (Pcna).